Reading from the N-terminus, the 262-residue chain is Acyl-[acyl-carrier-protein]--UDP-N-acetylglucosamine O-acyltransferase (262 aa).

It belongs to the transferase hexapeptide repeat family. LpxA subfamily. In terms of assembly, homotrimer.

It localises to the cytoplasm. It carries out the reaction a (3R)-hydroxyacyl-[ACP] + UDP-N-acetyl-alpha-D-glucosamine = a UDP-3-O-[(3R)-3-hydroxyacyl]-N-acetyl-alpha-D-glucosamine + holo-[ACP]. It participates in glycolipid biosynthesis; lipid IV(A) biosynthesis; lipid IV(A) from (3R)-3-hydroxytetradecanoyl-[acyl-carrier-protein] and UDP-N-acetyl-alpha-D-glucosamine: step 1/6. Involved in the biosynthesis of lipid A, a phosphorylated glycolipid that anchors the lipopolysaccharide to the outer membrane of the cell. This Haemophilus influenzae (strain PittEE) protein is Acyl-[acyl-carrier-protein]--UDP-N-acetylglucosamine O-acyltransferase.